A 266-amino-acid polypeptide reads, in one-letter code: Killer cell lectin-like receptor 3 (266 aa).

Residues M1 to K48 are Cytoplasmic-facing. A helical; Signal-anchor for type II membrane protein membrane pass occupies residues A49–F69. Residues Q70–D266 lie on the Extracellular side of the membrane. N79, N87, N104, and N113 each carry an N-linked (GlcNAc...) asparagine glycan. The involved in dimerization stretch occupies residues W147–S151. A disulfide bond links C149 and C154. The C-type lectin domain occupies Y150–G258. N-linked (GlcNAc...) asparagine glycosylation occurs at N160. 5 implicated in MHC class I binding regions span residues N160 to T162, I195 to P196, K207 to K208, M224 to S233, and S240 to E245. Cystine bridges form between C167–C255, C171–C257, and C236–C249.

In terms of assembly, homodimer; disulfide-linked.

Its subcellular location is the membrane. Receptor on natural killer (NK) cells for class I MHC. The chain is Killer cell lectin-like receptor 3 (Klra3) from Mus musculus (Mouse).